Here is a 461-residue protein sequence, read N- to C-terminus: Argininosuccinate lyase (461 aa).

It belongs to the lyase 1 family. Argininosuccinate lyase subfamily.

It is found in the cytoplasm. The catalysed reaction is 2-(N(omega)-L-arginino)succinate = fumarate + L-arginine. The protein operates within amino-acid biosynthesis; L-arginine biosynthesis; L-arginine from L-ornithine and carbamoyl phosphate: step 3/3. This Nitrosomonas europaea (strain ATCC 19718 / CIP 103999 / KCTC 2705 / NBRC 14298) protein is Argininosuccinate lyase.